The following is a 229-amino-acid chain: 2,3-bisphosphoglycerate-dependent phosphoglycerate mutase (229 aa).

Residues 7 to 14 (RHGQSEWN), 20 to 21 (TG), arginine 59, 86 to 89 (ERHY), lysine 97, 113 to 114 (RR), and 182 to 183 (GN) each bind substrate. Histidine 8 serves as the catalytic Tele-phosphohistidine intermediate. Glutamate 86 serves as the catalytic Proton donor/acceptor.

Belongs to the phosphoglycerate mutase family. BPG-dependent PGAM subfamily.

The enzyme catalyses (2R)-2-phosphoglycerate = (2R)-3-phosphoglycerate. Its pathway is carbohydrate degradation; glycolysis; pyruvate from D-glyceraldehyde 3-phosphate: step 3/5. In terms of biological role, catalyzes the interconversion of 2-phosphoglycerate and 3-phosphoglycerate. This is 2,3-bisphosphoglycerate-dependent phosphoglycerate mutase from Listeria welshimeri serovar 6b (strain ATCC 35897 / DSM 20650 / CCUG 15529 / CIP 8149 / NCTC 11857 / SLCC 5334 / V8).